The chain runs to 282 residues: Putative peroxisomal biogenesis factor 19 (282 aa).

A disordered region spans residues 73 to 95; that stretch reads QEEAMKKAGADPSEGEGEQPLDP. Cysteine methyl ester is present on cysteine 279. A lipid anchor (S-farnesyl cysteine) is attached at cysteine 279. A propeptide spans 280–282 (removed in mature form); the sequence is SIM.

The protein belongs to the peroxin-19 family.

The protein localises to the peroxisome. This is Putative peroxisomal biogenesis factor 19 (prx-19) from Caenorhabditis elegans.